A 683-amino-acid chain; its full sequence is ATP-dependent zinc metalloprotease FtsH 2 (683 aa).

Residues 1–12 are compositionally biased toward polar residues; it reads MADQTSQNDNQN. The segment at 1 to 21 is disordered; the sequence is MADQTSQNDNQNGSGLPGGGP. Residues 1–28 are Cytoplasmic-facing; the sequence is MADQTSQNDNQNGSGLPGGGPSGTGRGR. A helical membrane pass occupies residues 29 to 49; sequence LIIWVIAGTLLALWAYSYWGM. The Periplasmic portion of the chain corresponds to 50 to 136; it reads GASGGERISY…VTKPESSFPW (87 aa). The chain crosses the membrane as a helical span at residues 137-157; the sequence is GLVIMGLLPVLLLFGVGYIFL. The Cytoplasmic segment spans residues 158–683; sequence RRMQSQGQGL…ASGSADASGS (526 aa). 228-235 contributes to the ATP binding site; the sequence is GPPGTGKT. Zn(2+) is bound at residue His450. Glu451 is a catalytic residue. Zn(2+)-binding residues include His454 and Asp526. The interval 627–683 is disordered; sequence VNGDTDEIGHMPTTNGAAASEENGSADDHEPDEATVIEEDGESGEGRASGSADASGS. A compositionally biased stretch (acidic residues) spans 655 to 669; it reads HEPDEATVIEEDGES. The segment covering 672-683 has biased composition (low complexity); that stretch reads GRASGSADASGS.

The protein in the central section; belongs to the AAA ATPase family. This sequence in the C-terminal section; belongs to the peptidase M41 family. Homohexamer. Requires Zn(2+) as cofactor.

The protein resides in the cell inner membrane. Its function is as follows. Acts as a processive, ATP-dependent zinc metallopeptidase for both cytoplasmic and membrane proteins. Plays a role in the quality control of integral membrane proteins. This chain is ATP-dependent zinc metalloprotease FtsH 2, found in Salinibacter ruber (strain M8).